The primary structure comprises 570 residues: Structure-specific endonuclease subunit EME1 (570 aa).

The span at 1 to 14 shows a compositional bias: low complexity; that stretch reads MALRRLSLSRLSTE. The interval 1–86 is disordered; it reads MALRRLSLSR…AGPVRVLSSS (86 aa). Phosphoserine occurs at positions 12 and 15. Residues 68–79 show a composition bias toward low complexity; it reads PSAAGAPPQAGP. Residues Ser-84, Ser-85, and Ser-87 each carry the phosphoserine modification. Residue Lys-103 forms a Glycyl lysine isopeptide (Lys-Gly) (interchain with G-Cter in SUMO2) linkage. Residue Ser-117 is modified to Phosphoserine. Residues 118–130 are compositionally biased toward polar residues; it reads SLKTGLDGQNNAS. 3 disordered regions span residues 118–147, 185–231, and 370–400; these read SLKT…PDVP, KTNS…ERKK, and RPQN…SSTG. Residues Lys-136 and Lys-142 each participate in a glycyl lysine isopeptide (Lys-Gly) (interchain with G-Cter in SUMO2) cross-link. The span at 218-231 shows a compositional bias: basic and acidic residues; it reads SRKENTPRQHERKK. A nuclease-like domain; forms the post-nick DNA binding interface and is involved in DNA recognition and bending region spans residues 249–456; that stretch reads KHIVVVLDPV…PFKKLRDQVT (208 aa). The segment at 476-570 is helix-hairpin-helix (2HhH); forms the pre-nick DNA binding interface and is involved in DNA recognition and bending; that stretch reads RGLALIWRRQ…QPDLILDSVD (95 aa).

Belongs to the EME1/MMS4 family. In terms of assembly, part of the heterodimeric MUS81-EME1 complex. Weakly expressed in brain, heart, kidney, liver, lung, muscle, skin, small intestine, spleen, stomach, testis and thymus. Expressed in bone marrow. Also expressed in embryonic stem cells (ES cells).

The protein localises to the nucleus. It localises to the nucleolus. Its function is as follows. Non-catalytic subunit of the structure-specific, heterodimeric DNA endonuclease MUS81-EME1 which is involved in the maintenance of genome stability. In the complex, EME1 is required for DNA cleavage, participating in DNA recognition and bending. MUS81-EME1 cleaves 3'-flaps and nicked Holliday junctions, and exhibit limited endonuclease activity with 5' flaps and nicked double-stranded DNAs. Active during prometaphase, MUS81-EME1 resolves mitotic recombination intermediates, including Holliday junctions, which form during homologous recombination. The polypeptide is Structure-specific endonuclease subunit EME1 (Mus musculus (Mouse)).